Consider the following 25-residue polypeptide: Ocellatin-P1 (25 aa).

Position 25 is a leucine amide (leucine 25).

In terms of tissue distribution, expressed by the skin glands.

The protein localises to the secreted. Functionally, antibacterial peptide that inhibits reference strains of both Gram-negative bacteria (E.coli, E.cloacae, K.pneumoniae, P.aeruginosa) and Gram-positive bacteria (S.aureus, S.epidermidis, E.faecalis, Streptococcus group B) with relatively low potencies (MIC=25-200 uM). The peptide shows very low hemolytic activity against human erythrocytes. Wheel projection demonstrates the amphipathicity of the alpha-helices is low which may explain the low antibacterial potency. The chain is Ocellatin-P1 from Leptodactylus pentadactylus (Smokey jungle frog).